A 486-amino-acid polypeptide reads, in one-letter code: Protein kinase C and casein kinase substrate in neurons protein 2 (486 aa).

Residues 11 to 282 (VEVSSDSFWE…SIKAADAVED (272 aa)) enclose the F-BAR domain. Residues 25-274 (KRTVKRIDDG…TIYRELEQSI (250 aa)) are a coiled coil. Lys-53 is modified (N6-acetyllysine). At Ser-273 the chain carries Phosphoserine. Ser-313 bears the Phosphoserine; by PKC mark. Positions 315–426 (REKKKAVDGV…NPFDEDTTSG (112 aa)) are disordered. Positions 327–362 (TGINQTGDQSGQNKPGSNLSVPSNPAQSTQLQSSYN) are enriched in polar residues. The NPF1 motif lies at 362–364 (NPF). Ser-373 carries the phosphoserine; by IKKB modification. Residues 384–396 (NVSSYEKTQTYPT) show a composition bias toward polar residues. Position 399 is a phosphoserine (Ser-399). The segment covering 404-416 (NNPFSSTDANGDS) has biased composition (polar residues). The NPF2 motif lies at 405 to 407 (NPF). Residues 417 to 419 (NPF) carry the NPF3 motif. One can recognise an SH3 domain in the interval 426–486 (GTEVRVRALY…YPANYVEAIQ (61 aa)). Position 446 is a phosphoserine (Ser-446).

It belongs to the PACSIN family. In terms of assembly, homodimer. May form heterooligomers with other PACSINs. Interacts (via NPF motifs) with EHD1 (via EH domain). Interacts (via NPF motifs) with EHD2 (via EH domain); this interaction probably stabilizes the caveolae. Interacts with EHD3. Interacts (via the SH3 domain) with MICALL1. Interacts with RAC1. Interacts (via SH3 domain) with DNM1, SYN1, SYNJ1 and WASL. Interacts (via F-BAR domain) with CAV1; this interaction induces membrane tubulation. Interacts with TRPV4. Forms a complex with EHD4 and MICALL1; the complex controls CDH5 trafficking and coordinates angiogenesis. Post-translationally, phosphorylated by casein kinase 2 (CK2). Phosphorylation by PKC probably decreases the membrane binding and tubulation capacities of PACSIN2, thereby modulating the lifetime of caveolae. Widely expressed (at protein level).

The protein resides in the cytoplasm. The protein localises to the cytoskeleton. Its subcellular location is the cytoplasmic vesicle membrane. It localises to the cell projection. It is found in the ruffle membrane. The protein resides in the early endosome. The protein localises to the recycling endosome membrane. Its subcellular location is the cell membrane. It localises to the membrane. It is found in the caveola. The protein resides in the cell junction. The protein localises to the adherens junction. Its function is as follows. Regulates the morphogenesis and endocytosis of caveolae. Lipid-binding protein that is able to promote the tubulation of the phosphatidic acid-containing membranes it preferentially binds. Plays a role in intracellular vesicle-mediated transport. Involved in the endocytosis of cell-surface receptors like the EGF receptor, contributing to its internalization in the absence of EGF stimulus. Essential for endothelial organization in sprouting angiogenesis, modulates CDH5-based junctions. Facilitates endothelial front-rear polarity during migration by recruiting EHD4 and MICALL1 to asymmetric adherens junctions between leader and follower cells. This Mus musculus (Mouse) protein is Protein kinase C and casein kinase substrate in neurons protein 2 (Pacsin2).